The chain runs to 134 residues: Methylglyoxal synthase (134 aa).

One can recognise an MGS-like domain in the interval 1–134 (MHIALIAHDE…DWRDLRRNDE (134 aa)). Residues H8, K12, 34–37 (TGTT), and 54–55 (SG) each bind substrate. Catalysis depends on D60, which acts as the Proton donor/acceptor. Residue H87 participates in substrate binding.

The protein belongs to the methylglyoxal synthase family.

The catalysed reaction is dihydroxyacetone phosphate = methylglyoxal + phosphate. In terms of biological role, catalyzes the formation of methylglyoxal from dihydroxyacetone phosphate. This is Methylglyoxal synthase from Listeria innocua serovar 6a (strain ATCC BAA-680 / CLIP 11262).